Reading from the N-terminus, the 479-residue chain is MFRRCFPIFNPYDVVVVGGGPGGYVAAIKAAQLGLKTACVEKRGALGGTCLNVGCIPSKALLHATHMYHDAHANFERYGLMGGAGVTMDVAKMQQQKEKSVNGLTSGVEYLLKKNKVTYYKGEAGFVTPNTLNVKGIDGKDEAIEAKNTIIATGSEPTALPFLPFDEKVVLSSTGALALQQVPKKMVVIGGGVIGLELGSVWARLGSDVTVVEFAPRCAPTLDSDVTDALVGALKRNGEDEVPMTGIEGVNGTNNGSIALTLEVEQAGGQAETLHCDALLVSVGRRPYTAGLGLEKNNVSLNERGFVKIGSHFETNVAGVYAIGDVVDKGPMLAHKAEDEGVACAEILAGRPGHVNYDVIPGVIYTMPEVASVGKTEEELKKAGVAYKVGKFPFNANSRAKAVATEDGFVKVLTDKATDRILGVHIVCSAAGELIAGALLAMEYGASSEDVGRTCHAHPTMSEAVKEACMACFAKTINF.

Residues 41 to 50 (EKRGALGGTC), Lys59, Ala124, and 153 to 155 (TGS) contribute to the FAD site. Cys50 and Cys55 are disulfide-bonded. Residues 190–197 (GGGVIGLE), Glu213, Ile247, and Gly284 each bind NAD(+). FAD contacts are provided by residues Asp325 and 332–335 (MLAH). His458 (proton acceptor) is an active-site residue.

Belongs to the class-I pyridine nucleotide-disulfide oxidoreductase family. In terms of assembly, homodimer. FAD serves as cofactor.

It carries out the reaction N(6)-[(R)-dihydrolipoyl]-L-lysyl-[protein] + NAD(+) = N(6)-[(R)-lipoyl]-L-lysyl-[protein] + NADH + H(+). The protein is Dihydrolipoyl dehydrogenase of Trypanosoma brucei brucei.